Here is a 557-residue protein sequence, read N- to C-terminus: Pectinesterase/pectinesterase inhibitor 18 (557 aa).

The signal sequence occupies residues 1-34 (MSNSNQPLLSKPKSLKHKNLCLVLSFVAILGSVA). Residues 47–203 (NNDDSLLTTS…VSRARVALAI (157 aa)) form a pectinesterase inhibitor 18 region. Positions 246-543 (NVVVAKDGTG…FTVAKLIQGG (298 aa)) are pectinesterase 18. The substrate site is built by threonine 321 and glutamine 351. Aspartate 374 acts as the Proton donor; for pectinesterase activity in catalysis. Aspartate 395 serves as the catalytic Nucleophile; for pectinesterase activity. 2 residues coordinate substrate: arginine 463 and tryptophan 465.

It in the N-terminal section; belongs to the PMEI family. In the C-terminal section; belongs to the pectinesterase family. As to expression, expressed in siliques, flowers, floral stems, rosette leaves and roots.

The protein resides in the secreted. Its subcellular location is the cell wall. It catalyses the reaction [(1-&gt;4)-alpha-D-galacturonosyl methyl ester](n) + n H2O = [(1-&gt;4)-alpha-D-galacturonosyl](n) + n methanol + n H(+). The enzyme catalyses Endohydrolysis of the N-glycosidic bond at one specific adenosine on the 28S rRNA.. It functions in the pathway glycan metabolism; pectin degradation; 2-dehydro-3-deoxy-D-gluconate from pectin: step 1/5. Functionally, acts in the modification of cell walls via demethylesterification of cell wall pectin. Inhibits the elongation phase of protein synthesis. This is Pectinesterase/pectinesterase inhibitor 18 (PME18) from Arabidopsis thaliana (Mouse-ear cress).